Here is a 197-residue protein sequence, read N- to C-terminus: Pyridoxal 5'-phosphate synthase subunit PdxT (197 aa).

53-55 (GES) is an L-glutamine binding site. Residue cysteine 85 is the Nucleophile of the active site. Residues arginine 114 and 142–143 (IR) contribute to the L-glutamine site. Residues histidine 179 and glutamate 181 each act as charge relay system in the active site.

The protein belongs to the glutaminase PdxT/SNO family. In the presence of PdxS, forms a dodecamer of heterodimers. Only shows activity in the heterodimer.

It carries out the reaction aldehydo-D-ribose 5-phosphate + D-glyceraldehyde 3-phosphate + L-glutamine = pyridoxal 5'-phosphate + L-glutamate + phosphate + 3 H2O + H(+). The enzyme catalyses L-glutamine + H2O = L-glutamate + NH4(+). It participates in cofactor biosynthesis; pyridoxal 5'-phosphate biosynthesis. In terms of biological role, catalyzes the hydrolysis of glutamine to glutamate and ammonia as part of the biosynthesis of pyridoxal 5'-phosphate. The resulting ammonia molecule is channeled to the active site of PdxS. In Thermococcus onnurineus (strain NA1), this protein is Pyridoxal 5'-phosphate synthase subunit PdxT.